The chain runs to 268 residues: Protein DEEPER ROOTING 1 (268 aa).

The span at 11-21 (LNGKQGNKKPN) shows a compositional bias: low complexity. The tract at residues 11–39 (LNGKQGNKKPNTVPITTHPAKQEPREEFS) is disordered. Residues 30–39 (AKQEPREEFS) are compositionally biased toward basic and acidic residues. The IGT motif signature appears at 44–50 (GLLAIGT). The tract at residues 220 to 246 (SRAASMKKYLEDRQIPTKKESNTEDDT) is disordered. The segment covering 227–246 (KYLEDRQIPTKKESNTEDDT) has biased composition (basic and acidic residues).

It belongs to the LAZY family. Expressed in roots.

In terms of biological role, involved in the development of the root system architecture by influencing lateral root angles and primary root length. The polypeptide is Protein DEEPER ROOTING 1 (Prunus persica (Peach)).